Here is a 295-residue protein sequence, read N- to C-terminus: ATP synthase gamma chain (295 aa).

The protein belongs to the ATPase gamma chain family. As to quaternary structure, F-type ATPases have 2 components, CF(1) - the catalytic core - and CF(0) - the membrane proton channel. CF(1) has five subunits: alpha(3), beta(3), gamma(1), delta(1), epsilon(1). CF(0) has three main subunits: a, b and c.

Its subcellular location is the cell inner membrane. Its function is as follows. Produces ATP from ADP in the presence of a proton gradient across the membrane. The gamma chain is believed to be important in regulating ATPase activity and the flow of protons through the CF(0) complex. In Chlorobium phaeobacteroides (strain BS1), this protein is ATP synthase gamma chain.